The chain runs to 181 residues: Oligoribonuclease (181 aa).

An Exonuclease domain is found at 8-171 (LIWIDLEMTG…QDIQESIAEL (164 aa)). Residue Y129 is part of the active site.

The protein belongs to the oligoribonuclease family.

It is found in the cytoplasm. Its function is as follows. 3'-to-5' exoribonuclease specific for small oligoribonucleotides. In Shewanella sp. (strain MR-4), this protein is Oligoribonuclease.